We begin with the raw amino-acid sequence, 402 residues long: Prostaglandin E2 receptor EP1 subtype (402 aa).

The Extracellular segment spans residues 1–35 (MSPCGPLNLSLAGEATTCAAPWVPNTSAVPPSGAS). Residues Asn-8 and Asn-25 are each glycosylated (N-linked (GlcNAc...) asparagine). The chain crosses the membrane as a helical span at residues 36–62 (PALPIFSMTLGAVSNLLALALLAQAAG). At 63–72 (RLRRRRSAAT) the chain is on the cytoplasmic side. The chain crosses the membrane as a helical span at residues 73–96 (FLLFVASLLATDLAGHVIPGALVL). At 97 to 111 (RLYTAGRAPAGGACH) the chain is on the extracellular side. The cysteines at positions 110 and 188 are disulfide-linked. A helical membrane pass occupies residues 112–133 (FLGGCMVFFGLCPLLLGCGMAV). Residues 134–155 (ERCVGVTRPLLHAARVSVARAR) lie on the Cytoplasmic side of the membrane. Residues 156–177 (LALAAVAAVALAVALLPLARVG) traverse the membrane as a helical segment. Residues 178–201 (RYELQYPGTWCFIGLGPPGGWRQA) are Extracellular-facing. The helical transmembrane segment at 202–227 (LLAGLFASLGLVALLAALVCNTLSGL) threads the bilayer. Topologically, residues 228–294 (ALLRARWRRR…ARRARAHDVE (67 aa)) are cytoplasmic. The segment at 238–266 (SRRPPPASGPDSRRRWGAHGPRSASASSA) is disordered. Residues 295 to 321 (MVGQLVGIMVVSCICWSPMLVLVALAV) traverse the membrane as a helical segment. Residues 322–332 (GGWSSTSLQRP) are Extracellular-facing. Residues 333–354 (LFLAVRLASWNQILDPWVYILL) traverse the membrane as a helical segment. Residues 355 to 402 (RQAVLRQLLRLLPPRAGAKGGPAGLGLTPSAWEASSLRSSRHSGLSHF) are Cytoplasmic-facing.

Belongs to the G-protein coupled receptor 1 family. Phosphorylated. Abundant in kidney. Lower level expression in lung, skeletal muscle and spleen, lowest expression in testis and not detected in liver brain and heart.

The protein resides in the cell membrane. Functionally, receptor for prostaglandin E2 (PGE2). The activity of this receptor is mediated by G(q) proteins which activate a phosphatidylinositol-calcium second messenger system. May play a role as an important modulator of renal function. Implicated the smooth muscle contractile response to PGE2 in various tissues. The chain is Prostaglandin E2 receptor EP1 subtype (PTGER1) from Homo sapiens (Human).